Here is a 522-residue protein sequence, read N- to C-terminus: Poly(A) polymerase (522 aa).

ATP is bound by residues 63-65 (YGS), 76-78 (DID), Asp130, Lys193, Tyr202, and 211-212 (GI). 3 residues coordinate Mg(2+): Asp76, Asp78, and Asp130. The tract at residues 475–522 (QLKAKEENSIPNEEKKEQLKKEMKQEANTIVKNSSTDDDFMKRFTRKN) is disordered. The segment covering 476–499 (LKAKEENSIPNEEKKEQLKKEMKQ) has biased composition (basic and acidic residues).

The protein belongs to the poly(A) polymerase family. The cofactor is Mg(2+). It depends on Mn(2+) as a cofactor.

The protein localises to the cytoplasm. It is found in the nucleus. It carries out the reaction RNA(n) + ATP = RNA(n)-3'-adenine ribonucleotide + diphosphate. Functionally, polymerase that creates the 3'-poly(A) tail of mRNA's. May acquire specificity through interaction with a cleavage and polyadenylation factor. In Entamoeba histolytica (strain ATCC 30459 / HM-1:IMSS / ABRM), this protein is Poly(A) polymerase.